Consider the following 309-residue polypeptide: MGKWKVGTRRSKLALTQTNWVVDKLKGFAPEADFELHEIVTKGDRILDVTLSKVGGKGLFVKEIEQSLFDKETDFAVHSLKDMPAELPDGLVIGAIPKRVDPRDVLLSKDGKTLDELPQGALVGTSSLRRSSQILAYRPDIQIESLRGNIDTRMRKLAEGNFDAIILAAAGLERVNFEGEISQFLPVEISLPAVGQGALAIECRADDEETLALLKQFDDAPTRLAVSAERSFLHKLQGGCQVPIGAYATVGENNEITLTGMVGSPDGKQMFKNTATGQDPLALGIQVAEALLAQGAGDVLAEVLRENEQ.

Position 240 is an S-(dipyrrolylmethanemethyl)cysteine (cysteine 240).

It belongs to the HMBS family. In terms of assembly, monomer. Dipyrromethane serves as cofactor.

The catalysed reaction is 4 porphobilinogen + H2O = hydroxymethylbilane + 4 NH4(+). Its pathway is porphyrin-containing compound metabolism; protoporphyrin-IX biosynthesis; coproporphyrinogen-III from 5-aminolevulinate: step 2/4. In terms of biological role, tetrapolymerization of the monopyrrole PBG into the hydroxymethylbilane pre-uroporphyrinogen in several discrete steps. The protein is Porphobilinogen deaminase of Brevibacillus brevis (strain 47 / JCM 6285 / NBRC 100599).